Here is a 545-residue protein sequence, read N- to C-terminus: MAKDLKFSEDARRAMLRGVDTLADAVKVTLGPKGRNVVLDKKFGSPLITNDGVTIAKEIELEDAFENMGAQLVSEVASKTNDVAGDGTTTATVLAQAMIREGLKNVTSGANPVGIRRGIEKAVELAVQELKGISQPIESKEAISQIAAVSSGDEEVGQLIAEAMERVGNDGVITIEESKGFNTELEVVEGMQFDRGYASPYMVTDQDKMEAVLEDPYILITDKKIGNIQEVLPVLEQVVQQGKPLLMIAEDVEGEALATLVVNKLRGTFNAVAVKAPGFGDRRKAMLEDIAVLTGAEVITEDLGLDLKSASIDQLGRASKVVVTKENTTVVEGSGDPEAISSRVAQIRAQAEESTSDFDKEKLQERLAKLAGGVAVIKVGAATETELKERKLRIEDALNSTRAGVEEGMVPGGGTALVNIHRQVSELTLEGDEATGASIVLRALEEPVRQIVHNAGLEGSIIVERLKGEKVGIGYNAATDEWVNMVEAGIVDPTKVTRSALQNAASVAAMFLTTEAVVADKPEENGGAGGGMPDMGGMGGMGGMM.

ATP-binding positions include 29 to 32 (TLGP), 86 to 90 (DGTTT), glycine 413, 476 to 478 (NAA), and aspartate 492.

The protein belongs to the chaperonin (HSP60) family. Forms a cylinder of 14 subunits composed of two heptameric rings stacked back-to-back. Interacts with the co-chaperonin GroES.

It localises to the cytoplasm. It carries out the reaction ATP + H2O + a folded polypeptide = ADP + phosphate + an unfolded polypeptide.. Its function is as follows. Together with its co-chaperonin GroES, plays an essential role in assisting protein folding. The GroEL-GroES system forms a nano-cage that allows encapsulation of the non-native substrate proteins and provides a physical environment optimized to promote and accelerate protein folding. The protein is Chaperonin GroEL of Oceanobacillus iheyensis (strain DSM 14371 / CIP 107618 / JCM 11309 / KCTC 3954 / HTE831).